A 392-amino-acid chain; its full sequence is Early estrogen-induced gene 1 protein (392 aa).

Residues 2–145 (AFLMKKKKFK…ILKVTIGMFL (144 aa)) enclose the C2 NT-type domain. The tract at residues 129–138 (NTRQDNSILK) is required for interaction with TNFRSF11A/RANK. The tract at residues 173–324 (LTCKGGGTSS…RKKDSVESHP (152 aa)) is disordered. The segment covering 183–194 (GGSSSTNSLTGS) has biased composition (low complexity). Residues 228 to 255 (SRNSSYASQQSKLSGYSTEHSRSSSLSD) are compositionally biased toward polar residues. Positions 262 to 273 (TSTSSSASGGLS) are enriched in low complexity. Composition is skewed to basic and acidic residues over residues 281 to 300 (GMER…EKPP) and 307 to 324 (HLSD…ESHP).

This sequence belongs to the EEIG family. In terms of assembly, part of a complex composed of EEIG1, TNFRSF11A/RANK, PLCG2, GAB2, TEC and BTK; complex formation increases in the presence of TNFSF11/RANKL. Interacts with PRDM1/BLIMP1; following TNFSF11/RANKL stimulation in bone marrow-derived macrophages, the interaction promotes the binding of PRDM1/BLIMP1 to the gene promoter of IRF8. Interacts (via N-terminus) with TNFRSF11A/RANK (via cytoplasmic domain); when in the presence of TNFSF11/RANKL. As to expression, expressed during TNFSF11/RANKL-induced differentiation of bone marrow-derived macrophages to osteoclasts.

Its subcellular location is the nucleus. The protein localises to the cytoplasm. The protein resides in the membrane raft. Its function is as follows. Key component of TNFSF11/RANKL- and TNF-induced osteoclastogenesis pathways, thereby mediates bone resorption in pathological bone loss conditions. Required for TNFSF11/RANKL-induced osteoclastogenesis via its interaction with TNFRSF11A/RANK, thereby facilitates the downsteam transcription of NFATC1 and activation of PLCG2. Facilitates recruitment of the transcriptional repressor PRDM1/BLIMP1 to the promoter of the anti-osteoclastogenesis gene IRF8, thereby resulting in transcription of osteoclast differentiation factors. May play a role in estrogen action. In Mus musculus (Mouse), this protein is Early estrogen-induced gene 1 protein (Eeig1).